The chain runs to 388 residues: Succinate--CoA ligase [ADP-forming] subunit beta (388 aa).

The ATP-grasp domain maps to 9 to 244 (KSLFAEYGLP…PSQDDAREAH (236 aa)). ATP is bound by residues K46, 53-55 (GRG), E99, T102, and E107. Residues N199 and D213 each coordinate Mg(2+). Residues N264 and 321 to 323 (GIV) contribute to the substrate site.

Belongs to the succinate/malate CoA ligase beta subunit family. As to quaternary structure, heterotetramer of two alpha and two beta subunits. It depends on Mg(2+) as a cofactor.

The catalysed reaction is succinate + ATP + CoA = succinyl-CoA + ADP + phosphate. It catalyses the reaction GTP + succinate + CoA = succinyl-CoA + GDP + phosphate. It functions in the pathway carbohydrate metabolism; tricarboxylic acid cycle; succinate from succinyl-CoA (ligase route): step 1/1. Functionally, succinyl-CoA synthetase functions in the citric acid cycle (TCA), coupling the hydrolysis of succinyl-CoA to the synthesis of either ATP or GTP and thus represents the only step of substrate-level phosphorylation in the TCA. The beta subunit provides nucleotide specificity of the enzyme and binds the substrate succinate, while the binding sites for coenzyme A and phosphate are found in the alpha subunit. This chain is Succinate--CoA ligase [ADP-forming] subunit beta, found in Shewanella sp. (strain ANA-3).